Here is a 577-residue protein sequence, read N- to C-terminus: Calcium-dependent protein kinase 22 (577 aa).

Glycine 2 carries N-myristoyl glycine lipidation. A Protein kinase domain is found at 105–368 (YRLGAELGRG…AKEVLEHPWL (264 aa)). ATP is bound by residues 111–119 (LGRGEFGVT) and lysine 134. Aspartate 234 acts as the Proton acceptor in catalysis. Positions 374–404 (APNVSLGEIVRSRLMQFSAMNKFKKKALGVV) are autoinhibitory domain. 4 EF-hand domains span residues 411-446 (EEMDKYTQMFHKMDKDNSGNLTLEDLKLGLQINGHP), 447-482 (VPETEIEMLLEAGDIDGNGTLDCEEFVTVLLHIKKM), 483-518 (SNEEYLPKAFKFFDKDGNGFIEMEELMDALGDELGP), and 520-553 (EQVVKDIIRDIDTDKDGRISYQEFESMMISGSDW). Positions 424, 426, 428, 430, 435, 460, 462, 464, 466, 471, 496, 498, 500, 507, 531, 533, 535, 537, and 542 each coordinate Ca(2+).

It belongs to the protein kinase superfamily. Ser/Thr protein kinase family. CDPK subfamily.

It localises to the membrane. It catalyses the reaction L-seryl-[protein] + ATP = O-phospho-L-seryl-[protein] + ADP + H(+). The enzyme catalyses L-threonyl-[protein] + ATP = O-phospho-L-threonyl-[protein] + ADP + H(+). With respect to regulation, activated by calcium. Autophosphorylation may play an important role in the regulation of the kinase activity. Functionally, may play a role in signal transduction pathways that involve calcium as a second messenger. The sequence is that of Calcium-dependent protein kinase 22 from Oryza sativa subsp. japonica (Rice).